The following is a 705-amino-acid chain: Polyribonucleotide nucleotidyltransferase (705 aa).

Residues Asp485 and Asp491 each coordinate Mg(2+). The region spanning 552–611 (PKVFTMSINPSKIKDVIGAGGKTINKIIDETGVKIDIKEDGSVFVTAEDYESGKKALAMI) is the KH domain. Residues 621-689 (GEVYLGKVTK…SMGRVNLSRK (69 aa)) enclose the S1 motif domain.

It belongs to the polyribonucleotide nucleotidyltransferase family. The cofactor is Mg(2+).

It is found in the cytoplasm. It catalyses the reaction RNA(n+1) + phosphate = RNA(n) + a ribonucleoside 5'-diphosphate. Involved in mRNA degradation. Catalyzes the phosphorolysis of single-stranded polyribonucleotides processively in the 3'- to 5'-direction. The sequence is that of Polyribonucleotide nucleotidyltransferase from Clostridium novyi (strain NT).